Here is a 333-residue protein sequence, read N- to C-terminus: L-lactate dehydrogenase A chain (333 aa).

Residues 30 to 58 (GMVG…MEDK) and Arg-100 contribute to the NAD(+) site. Arg-107, Asn-139, and Arg-170 together coordinate substrate. Asn-139 is an NAD(+) binding site. His-194 serves as the catalytic Proton acceptor. Thr-249 lines the substrate pocket.

It belongs to the LDH/MDH superfamily. LDH family. In terms of assembly, homotetramer.

The protein resides in the cytoplasm. It carries out the reaction (S)-lactate + NAD(+) = pyruvate + NADH + H(+). It functions in the pathway fermentation; pyruvate fermentation to lactate; (S)-lactate from pyruvate: step 1/1. This Cyprinus carpio (Common carp) protein is L-lactate dehydrogenase A chain (ldha).